A 384-amino-acid chain; its full sequence is 1-deoxy-D-xylulose 5-phosphate reductoisomerase (384 aa).

The NADPH site is built by Thr10, Gly11, Ser12, Ile13, Gly36, Asn38, and Asn122. A 1-deoxy-D-xylulose 5-phosphate-binding site is contributed by Lys123. Glu124 serves as a coordination point for NADPH. Asp148 contacts Mn(2+). Positions 149, 150, 174, and 197 each coordinate 1-deoxy-D-xylulose 5-phosphate. Glu150 serves as a coordination point for Mn(2+). Gly203 contacts NADPH. The 1-deoxy-D-xylulose 5-phosphate site is built by Ser210, Asn215, Lys216, and Glu219. Glu219 is a Mn(2+) binding site.

Belongs to the DXR family. It depends on Mg(2+) as a cofactor. The cofactor is Mn(2+).

It carries out the reaction 2-C-methyl-D-erythritol 4-phosphate + NADP(+) = 1-deoxy-D-xylulose 5-phosphate + NADPH + H(+). It functions in the pathway isoprenoid biosynthesis; isopentenyl diphosphate biosynthesis via DXP pathway; isopentenyl diphosphate from 1-deoxy-D-xylulose 5-phosphate: step 1/6. In terms of biological role, catalyzes the NADPH-dependent rearrangement and reduction of 1-deoxy-D-xylulose-5-phosphate (DXP) to 2-C-methyl-D-erythritol 4-phosphate (MEP). The sequence is that of 1-deoxy-D-xylulose 5-phosphate reductoisomerase from Geotalea daltonii (strain DSM 22248 / JCM 15807 / FRC-32) (Geobacter daltonii).